We begin with the raw amino-acid sequence, 255 residues long: Cytochrome c oxidase subunit 2 (255 aa).

At 1 to 42 (MKFFFFSFINYKVLNDAARPWQIGFQDPATPIMEGIVNLHHD) the chain is on the mitochondrial intermembrane side. Residues 43–63 (IIFFLIIIIIFVSWILFRTLF) traverse the membrane as a helical segment. The Mitochondrial matrix portion of the chain corresponds to 64-83 (LFNSKTNPVAYNFSHGTFIE). Residues 84 to 104 (LLWTLTPSLVLIGIAVPSFAL) traverse the membrane as a helical segment. Residues 105–255 (LYSIDEIIDP…IRWVQNKILD (151 aa)) lie on the Mitochondrial intermembrane side of the membrane. Positions 187, 222, 224, 226, 230, and 233 each coordinate Cu cation. Mg(2+) is bound at residue glutamate 224.

It belongs to the cytochrome c oxidase subunit 2 family. Component of the cytochrome c oxidase (complex IV, CIV), a multisubunit enzyme composed of a catalytic core of 3 subunits and several supernumerary subunits. The complex exists as a monomer or a dimer and forms supercomplexes (SCs) in the inner mitochondrial membrane with ubiquinol-cytochrome c oxidoreductase (cytochrome b-c1 complex, complex III, CIII). The cofactor is Cu cation.

It localises to the mitochondrion inner membrane. The enzyme catalyses 4 Fe(II)-[cytochrome c] + O2 + 8 H(+)(in) = 4 Fe(III)-[cytochrome c] + 2 H2O + 4 H(+)(out). Functionally, component of the cytochrome c oxidase, the last enzyme in the mitochondrial electron transport chain which drives oxidative phosphorylation. The respiratory chain contains 3 multisubunit complexes succinate dehydrogenase (complex II, CII), ubiquinol-cytochrome c oxidoreductase (cytochrome b-c1 complex, complex III, CIII) and cytochrome c oxidase (complex IV, CIV), that cooperate to transfer electrons derived from NADH and succinate to molecular oxygen, creating an electrochemical gradient over the inner membrane that drives transmembrane transport and the ATP synthase. Cytochrome c oxidase is the component of the respiratory chain that catalyzes the reduction of oxygen to water. Electrons originating from reduced cytochrome c in the intermembrane space (IMS) are transferred via the dinuclear copper A center (CU(A)) of subunit 2 and heme A of subunit 1 to the active site in subunit 1, a binuclear center (BNC) formed by heme A3 and copper B (CU(B)). The BNC reduces molecular oxygen to 2 water molecules using 4 electrons from cytochrome c in the IMS and 4 protons from the mitochondrial matrix. The protein is Cytochrome c oxidase subunit 2 (COX2) of Cyanidium caldarium (Red alga).